A 277-amino-acid polypeptide reads, in one-letter code: MNVFTTLQQFVPQQKISKVAGRLAASRHPWVKRTFIRSFAKAYDVSLDEYERQSLNAYESFNDFFTRELQDNARIIDASINGIVSPADGMISQLGQIHDHKLLQAKGRDYDIGQLLADSADGDYFADGSFATVYLAPSNYHRVHMPFDGTLIKTRYVPGTLFSVNNTTAANVPDLFARNERLVCLFDTAYGKAAVVMVGAMIVAGIETVATGKISRTDDIQEADHDMSFKKGDELGRFYLGSTAIVVLPKAAKTEWQATMQHGSTVQMGQLLANAKI.

Active-site charge relay system; for autoendoproteolytic cleavage activity residues include D88, H144, and S242. S242 (schiff-base intermediate with substrate; via pyruvic acid; for decarboxylase activity) is an active-site residue. S242 is modified (pyruvic acid (Ser); by autocatalysis).

This sequence belongs to the phosphatidylserine decarboxylase family. PSD-B subfamily. Prokaryotic type I sub-subfamily. As to quaternary structure, heterodimer of a large membrane-associated beta subunit and a small pyruvoyl-containing alpha subunit. It depends on pyruvate as a cofactor. Is synthesized initially as an inactive proenzyme. Formation of the active enzyme involves a self-maturation process in which the active site pyruvoyl group is generated from an internal serine residue via an autocatalytic post-translational modification. Two non-identical subunits are generated from the proenzyme in this reaction, and the pyruvate is formed at the N-terminus of the alpha chain, which is derived from the carboxyl end of the proenzyme. The autoendoproteolytic cleavage occurs by a canonical serine protease mechanism, in which the side chain hydroxyl group of the serine supplies its oxygen atom to form the C-terminus of the beta chain, while the remainder of the serine residue undergoes an oxidative deamination to produce ammonia and the pyruvoyl prosthetic group on the alpha chain. During this reaction, the Ser that is part of the protease active site of the proenzyme becomes the pyruvoyl prosthetic group, which constitutes an essential element of the active site of the mature decarboxylase.

Its subcellular location is the cell membrane. The catalysed reaction is a 1,2-diacyl-sn-glycero-3-phospho-L-serine + H(+) = a 1,2-diacyl-sn-glycero-3-phosphoethanolamine + CO2. It participates in phospholipid metabolism; phosphatidylethanolamine biosynthesis; phosphatidylethanolamine from CDP-diacylglycerol: step 2/2. Catalyzes the formation of phosphatidylethanolamine (PtdEtn) from phosphatidylserine (PtdSer). This chain is Phosphatidylserine decarboxylase proenzyme, found in Psychrobacter arcticus (strain DSM 17307 / VKM B-2377 / 273-4).